Here is a 105-residue protein sequence, read N- to C-terminus: Thioredoxin (105 aa).

In terms of domain architecture, Thioredoxin spans 1 to 105 (VQVISSYDQF…LQAAITQHSA (105 aa)). Catalysis depends on nucleophile residues Cys-29 and Cys-32. The cysteines at positions 29 and 32 are disulfide-linked.

Belongs to the thioredoxin family. Monomer.

Functionally, participates in various redox reactions through the reversible oxidation of its active center dithiol to a disulfide and catalyzes dithiol-disulfide exchange reactions. The protein is Thioredoxin of Malassezia sympodialis (Atopic eczema-associated yeast).